Here is a 128-residue protein sequence, read N- to C-terminus: MRHRKSGRQLNRNSSHRQAMFRNMAGSLVRHEIIKTTLPKAKELRRVVEPLITLAKTDSVANRRLAFARTRDNEIVAKLFNELGPRFASRAGGYTRILKCGFRAGDNAPMAYIELVDRSASEAEAAAE.

This sequence belongs to the bacterial ribosomal protein bL17 family. Part of the 50S ribosomal subunit. Contacts protein L32.

This Edwardsiella ictaluri (strain 93-146) protein is Large ribosomal subunit protein bL17.